Consider the following 282-residue polypeptide: Pantothenate synthetase (282 aa).

Methionine 30–histidine 37 is a binding site for ATP. The active-site Proton donor is histidine 37. Glutamine 61 contacts (R)-pantoate. Glutamine 61 contributes to the beta-alanine binding site. Glycine 147–aspartate 150 contacts ATP. Residue glutamine 153 coordinates (R)-pantoate. ATP is bound by residues valine 176 and lysine 184 to arginine 187.

Belongs to the pantothenate synthetase family. As to quaternary structure, homodimer.

The protein localises to the cytoplasm. It carries out the reaction (R)-pantoate + beta-alanine + ATP = (R)-pantothenate + AMP + diphosphate + H(+). It participates in cofactor biosynthesis; (R)-pantothenate biosynthesis; (R)-pantothenate from (R)-pantoate and beta-alanine: step 1/1. In terms of biological role, catalyzes the condensation of pantoate with beta-alanine in an ATP-dependent reaction via a pantoyl-adenylate intermediate. This Bacillus cereus (strain ATCC 10987 / NRS 248) protein is Pantothenate synthetase.